A 477-amino-acid polypeptide reads, in one-letter code: 23S rRNA (uracil(1939)-C(5))-methyltransferase RlmD (477 aa).

The TRAM domain maps to 7–66; sequence KTENFPPDWLLVESLDLEAQGVAHRADGKVVFIKGALPFELVSANVHRKKNNWEQGVVTA. The [4Fe-4S] cluster site is built by cysteine 79, cysteine 89, cysteine 92, and cysteine 171. Glutamine 280, phenylalanine 309, asparagine 314, glutamate 330, asparagine 365, and aspartate 386 together coordinate S-adenosyl-L-methionine. The active-site Nucleophile is cysteine 432.

The protein belongs to the class I-like SAM-binding methyltransferase superfamily. RNA M5U methyltransferase family. RlmD subfamily.

It catalyses the reaction uridine(1939) in 23S rRNA + S-adenosyl-L-methionine = 5-methyluridine(1939) in 23S rRNA + S-adenosyl-L-homocysteine + H(+). In terms of biological role, catalyzes the formation of 5-methyl-uridine at position 1939 (m5U1939) in 23S rRNA. The protein is 23S rRNA (uracil(1939)-C(5))-methyltransferase RlmD of Albidiferax ferrireducens (strain ATCC BAA-621 / DSM 15236 / T118) (Rhodoferax ferrireducens).